Here is a 214-residue protein sequence, read N- to C-terminus: Guanylate kinase (214 aa).

Positions 6–192 (GTLYIISAPS…ALEDLKAIFR (187 aa)) constitute a Guanylate kinase-like domain. 13–20 (APSGAGKT) serves as a coordination point for ATP.

The protein belongs to the guanylate kinase family.

It localises to the cytoplasm. It catalyses the reaction GMP + ATP = GDP + ADP. In terms of biological role, essential for recycling GMP and indirectly, cGMP. In Pseudomonas savastanoi pv. phaseolicola (strain 1448A / Race 6) (Pseudomonas syringae pv. phaseolicola (strain 1448A / Race 6)), this protein is Guanylate kinase.